The chain runs to 127 residues: Major sperm protein isoform alpha (127 aa).

An N-acetylalanine modification is found at alanine 2. The MSP domain maps to 9-126 (DINTQPSQKI…RRKNLPIEYN (118 aa)).

Forms filaments 10 nm wide, with a characteristic substructure repeating axially at 9 nm. In terms of tissue distribution, sperm.

It localises to the cell projection. Its subcellular location is the pseudopodium. The protein resides in the cytoplasm. It is found in the cytoskeleton. In terms of biological role, central component in molecular interactions underlying sperm crawling. Forms an extensive filament system that extends from sperm villipoda, along the leading edge of the pseudopod. The polypeptide is Major sperm protein isoform alpha (Ascaris suum (Pig roundworm)).